The following is a 602-amino-acid chain: MFPRRLDSPAAYGIAQAMMDGFDRHYRLFRAESARAKHRFETSDWSGQQRAQRERIEFYDLRVKECVRRLEKEFSAGAQPMDVWHQVKLHYIGLLVGHRQPELAETFFNSVTTKILHRTHFHNDFIFVRPAISTEYLENDEPGARPTYRAYYPTPESLQETLVRVVDNFQLQGEFEDLARDAGRVAEVMRPRLGPAKWRANFQIQVLSSLFYRNKGAYLVGKVINGFQELAFALPILHGTDGRYVIDAALFGEDDLQMLFSFARAYFMVDMEIPSAYVQFLRSLMPRKPRAELYNALGLAKQGKTLFYRDFLHHLRYSSDRFRIAPGIKGMVMLVFDLPSFPFVFKVIKDYYPPQKDTTREQIKGKYLLVKQHDRVGRMADTLEYSEVAFPRERFEDDLIAEIEKFAPSQLEISDRDGDGNVEVILKHVYIERRMIPLNIYLQEAFDAGPHDARARQQMERSVVEYGNAIKDLVAANIFPGDMLWKNFGVTRNGKVVFYDYDEIEYLTDCHFRRVPAPRNEEDELSGEVWWAVGPRDVFPETFGPFLLGNDAVREVFMRHHADLLDPVFWQSHKERIQAGHMYDVFPYDPERRFGAGTGSPA.

ATP is bound by residues 325-331 (APGIKGM) and K346. D381 is a catalytic residue.

The protein belongs to the AceK family.

Its subcellular location is the cytoplasm. It carries out the reaction L-seryl-[isocitrate dehydrogenase] + ATP = O-phospho-L-seryl-[isocitrate dehydrogenase] + ADP + H(+). In terms of biological role, bifunctional enzyme which can phosphorylate or dephosphorylate isocitrate dehydrogenase (IDH) on a specific serine residue. This is a regulatory mechanism which enables bacteria to bypass the Krebs cycle via the glyoxylate shunt in response to the source of carbon. When bacteria are grown on glucose, IDH is fully active and unphosphorylated, but when grown on acetate or ethanol, the activity of IDH declines drastically concomitant with its phosphorylation. This Paracidovorax citrulli (strain AAC00-1) (Acidovorax citrulli) protein is Isocitrate dehydrogenase kinase/phosphatase.